A 159-amino-acid chain; its full sequence is 8-oxo-dGTP diphosphatase (159 aa).

The 133-residue stretch at 1–133 (MTKLATICYI…DYEIFKWILD (133 aa)) folds into the Nudix hydrolase domain. G38, E53, E56, and E57 together coordinate Mg(2+). A Nudix box motif is present at residues 38-59 (GKLEKGESPDECARREIFEETH).

This sequence belongs to the Nudix hydrolase family. As to quaternary structure, homotrimer. Mg(2+) serves as cofactor.

The enzyme catalyses 8-oxo-dGTP + H2O = 8-oxo-dGMP + diphosphate + H(+). In terms of biological role, involved in the DNA repair system to avoid A.T to G.C transversions. Degrades 8-oxo-dGTP to the monophosphate, but is also active on all of the nucleoside triphosphates. In Streptococcus mutans serotype c (strain ATCC 700610 / UA159), this protein is 8-oxo-dGTP diphosphatase (mutX).